Here is a 388-residue protein sequence, read N- to C-terminus: Chorismate synthase (388 aa).

Residues Arg39 and Arg45 each contribute to the NADP(+) site. Residues 130–132 (RSS), 251–252 (NA), Gly296, 311–315 (KPIPT), and Arg337 each bind FMN.

Belongs to the chorismate synthase family. As to quaternary structure, homotetramer. The cofactor is FMNH2.

The catalysed reaction is 5-O-(1-carboxyvinyl)-3-phosphoshikimate = chorismate + phosphate. It functions in the pathway metabolic intermediate biosynthesis; chorismate biosynthesis; chorismate from D-erythrose 4-phosphate and phosphoenolpyruvate: step 7/7. In terms of biological role, catalyzes the anti-1,4-elimination of the C-3 phosphate and the C-6 proR hydrogen from 5-enolpyruvylshikimate-3-phosphate (EPSP) to yield chorismate, which is the branch point compound that serves as the starting substrate for the three terminal pathways of aromatic amino acid biosynthesis. This reaction introduces a second double bond into the aromatic ring system. The protein is Chorismate synthase of Streptococcus uberis (strain ATCC BAA-854 / 0140J).